The following is a 246-amino-acid chain: Probable transcriptional regulatory protein YebC (246 aa).

A disordered region spans residues 1–20 (MAGHSKWANTRHRKAAQDAK).

This sequence belongs to the TACO1 family.

The protein resides in the cytoplasm. This is Probable transcriptional regulatory protein YebC from Salmonella choleraesuis (strain SC-B67).